A 353-amino-acid polypeptide reads, in one-letter code: UDP-N-acetylglucosamine--N-acetylmuramyl-(pentapeptide) pyrophosphoryl-undecaprenol N-acetylglucosamine transferase (353 aa).

UDP-N-acetyl-alpha-D-glucosamine contacts are provided by residues 15–17, asparagine 125, arginine 165, serine 186, and glutamine 286; that span reads TGG.

It belongs to the glycosyltransferase 28 family. MurG subfamily.

It localises to the cell inner membrane. The enzyme catalyses di-trans,octa-cis-undecaprenyl diphospho-N-acetyl-alpha-D-muramoyl-L-alanyl-D-glutamyl-meso-2,6-diaminopimeloyl-D-alanyl-D-alanine + UDP-N-acetyl-alpha-D-glucosamine = di-trans,octa-cis-undecaprenyl diphospho-[N-acetyl-alpha-D-glucosaminyl-(1-&gt;4)]-N-acetyl-alpha-D-muramoyl-L-alanyl-D-glutamyl-meso-2,6-diaminopimeloyl-D-alanyl-D-alanine + UDP + H(+). It participates in cell wall biogenesis; peptidoglycan biosynthesis. Its function is as follows. Cell wall formation. Catalyzes the transfer of a GlcNAc subunit on undecaprenyl-pyrophosphoryl-MurNAc-pentapeptide (lipid intermediate I) to form undecaprenyl-pyrophosphoryl-MurNAc-(pentapeptide)GlcNAc (lipid intermediate II). The polypeptide is UDP-N-acetylglucosamine--N-acetylmuramyl-(pentapeptide) pyrophosphoryl-undecaprenol N-acetylglucosamine transferase (Chlamydia muridarum (strain MoPn / Nigg)).